The primary structure comprises 340 residues: NADPH dehydrogenase (340 aa).

23–26 lines the FMN pocket; it reads SPMC. Position 28 (Tyr-28) interacts with substrate. FMN contacts are provided by Ala-60 and Gln-102. Residue 164–167 coordinates substrate; that stretch reads HGAH. Residues Arg-215 and 307-308 each bind FMN; that span reads AR.

The protein belongs to the NADH:flavin oxidoreductase/NADH oxidase family. NamA subfamily. Homotetramer. FMN is required as a cofactor.

The catalysed reaction is A + NADPH + H(+) = AH2 + NADP(+). In terms of biological role, catalyzes the reduction of the double bond of an array of alpha,beta-unsaturated aldehydes and ketones. It also reduces the nitro group of nitroester and nitroaromatic compounds. It could have a role in detoxification processes. This is NADPH dehydrogenase from Geobacillus sp. (strain WCH70).